The following is a 171-amino-acid chain: Large ribosomal subunit protein bL17 (171 aa).

Positions 140–152 (KREIQTKAREEKR) are enriched in basic and acidic residues. The disordered stretch occupies residues 140-171 (KREIQTKAREEKRATRKSNSAPVNKETTSKKK). Over residues 156–165 (KSNSAPVNKE) the composition is skewed to polar residues.

It belongs to the bacterial ribosomal protein bL17 family. As to quaternary structure, part of the 50S ribosomal subunit. Contacts protein L32.

The protein is Large ribosomal subunit protein bL17 of Leptospira interrogans serogroup Icterohaemorrhagiae serovar Lai (strain 56601).